The following is a 351-amino-acid chain: Tryptophan--tRNA ligase 2 (351 aa).

The disordered stretch occupies residues 1 to 24 (MPFVDLEVPTMTTPTPAATPARPR). Low complexity predominate over residues 9 to 24 (PTMTTPTPAATPARPR). The short motif at 31 to 39 (PTGALHLGH) is the 'HIGH' region element. A 'KMSKS' region motif is present at residues 215 to 219 (KMSKS). ATP is bound at residue K218.

The protein belongs to the class-I aminoacyl-tRNA synthetase family. In terms of assembly, homodimer. Forms a complex with nos; one homodimer of trpS2 binds one homodimer of nos.

It carries out the reaction tRNA(Trp) + L-tryptophan + ATP = L-tryptophyl-tRNA(Trp) + AMP + diphosphate + H(+). In terms of biological role, catalyzes the formation of 5'adenyl-Trp and tRNA(Trp) but with 5-fold less activity than TrpRS. Increases the solubility of the nitric oxide synthase oxygenase (nos), as well as its affinity for substrate L-arginine and its nitric-oxide synthase activity. The complex between trpS2 and nos catalyzes the regioselective nitration of tryptophan at the 4-position. In Deinococcus radiodurans (strain ATCC 13939 / DSM 20539 / JCM 16871 / CCUG 27074 / LMG 4051 / NBRC 15346 / NCIMB 9279 / VKM B-1422 / R1), this protein is Tryptophan--tRNA ligase 2 (trpS2).